Consider the following 809-residue polypeptide: Sucrose synthase 3 (809 aa).

Residues 277-755 (MVFNVVILSP…GLQRIYERYT (479 aa)) form a GT-B glycosyltransferase region.

This sequence belongs to the glycosyltransferase 1 family. Plant sucrose synthase subfamily. As to expression, detected in the whole plant with highest expression in developing siliques, vasculature of cotyledons and stomatal guard cells. Also detected throughout the mature parts of the root but not in the expanding zone.

The enzyme catalyses an NDP-alpha-D-glucose + D-fructose = a ribonucleoside 5'-diphosphate + sucrose + H(+). Its function is as follows. Sucrose-cleaving enzyme that provides UDP-glucose and fructose for various metabolic pathways. Modulates metabolic homeostasis and direct carbon towards starch synthesis in developing seeds. This Arabidopsis thaliana (Mouse-ear cress) protein is Sucrose synthase 3 (SUS3).